The chain runs to 278 residues: Energy-coupling factor transporter ATP-binding protein EcfA1 (278 aa).

Positions I5 to D239 constitute an ABC transporter domain. G39–S46 serves as a coordination point for ATP. E165 (proton acceptor) is an active-site residue.

It belongs to the ABC transporter superfamily. Energy-coupling factor EcfA family. Forms a stable energy-coupling factor (ECF) transporter complex probably composed of 2 membrane-embedded substrate-binding proteins (S component), 2 ATP-binding proteins (A component) and 2 transmembrane proteins (T component). This complex interacts with a number of substrate-specific components, including FolT and ThiT for 5-formyltetrahydrofolate and thiamine respectively.

It is found in the cell membrane. Functionally, ATP-binding (A) component of a common energy-coupling factor (ECF) ABC-transporter complex. Unlike classic ABC transporters this ECF transporter provides the energy necessary to transport a number of different substrates including 5-formyltetrahydrofolate and thiamine. Expression of the complex plus FolT or ThiT in Lactococcus lactis subsp. cremoris (strain NZ9000) allows 5-formyltetrahydrofolate or thiamine uptake respectively; 5-formyltetrahydrofolate or thiamine are not taken up in the absence of FolT/ThiT or the EcfA1A2T complex. Deenergized L.lactis subsp. cremoris (treated with 2-deoxyglucose) does not take up substrate. The polypeptide is Energy-coupling factor transporter ATP-binding protein EcfA1 (Lacticaseibacillus paracasei (strain ATCC 334 / BCRC 17002 / CCUG 31169 / CIP 107868 / KCTC 3260 / NRRL B-441) (Lactobacillus paracasei)).